Reading from the N-terminus, the 635-residue chain is Probable extracellular metalloproteinase 1 (635 aa).

The first 19 residues, 1–19 (MHGLLLAAGLLSLPLHVLA), serve as a signal peptide directing secretion. Residues 20–246 (HPQPSTSTSL…VHNVVDYVAH (227 aa)) constitute a propeptide that is removed on maturation. Residue asparagine 287 is glycosylated (N-linked (GlcNAc...) asparagine). Zn(2+) is bound at residue histidine 430. The active site involves glutamate 431. Histidine 434 lines the Zn(2+) pocket. 3 N-linked (GlcNAc...) asparagine glycosylation sites follow: asparagine 475, asparagine 594, and asparagine 623.

It belongs to the peptidase M36 family. Requires Zn(2+) as cofactor.

The protein resides in the secreted. In terms of biological role, secreted metalloproteinase probably acting as a virulence factor. The chain is Probable extracellular metalloproteinase 1 (MEP1) from Arthroderma benhamiae (strain ATCC MYA-4681 / CBS 112371) (Trichophyton mentagrophytes).